The chain runs to 31 residues: Cytochrome b6-f complex subunit 6 (31 aa).

A helical membrane pass occupies residues 4 to 24 (ILTYFGILFGILTITVIIFVA).

It belongs to the PetL family. The 4 large subunits of the cytochrome b6-f complex are cytochrome b6, subunit IV (17 kDa polypeptide, PetD), cytochrome f and the Rieske protein, while the 4 small subunits are PetG, PetL, PetM and PetN. The complex functions as a dimer.

It localises to the plastid. It is found in the chloroplast thylakoid membrane. Component of the cytochrome b6-f complex, which mediates electron transfer between photosystem II (PSII) and photosystem I (PSI), cyclic electron flow around PSI, and state transitions. PetL is important for photoautotrophic growth as well as for electron transfer efficiency and stability of the cytochrome b6-f complex. This is Cytochrome b6-f complex subunit 6 from Chaetosphaeridium globosum (Charophycean green alga).